A 190-amino-acid chain; its full sequence is Inosine triphosphate pyrophosphatase (190 aa).

An ITP-binding site is contributed by 10–15 (TGNAKK). Residue glutamate 40 coordinates Mg(2+). Residues lysine 52, 68-69 (DT), lysine 85, 144-147 (FGWD), lysine 167, and 172-173 (HR) contribute to the ITP site.

Belongs to the HAM1 NTPase family. Homodimer. Mg(2+) is required as a cofactor. Requires Mn(2+) as cofactor.

It localises to the cytoplasm. It carries out the reaction ITP + H2O = IMP + diphosphate + H(+). The enzyme catalyses dITP + H2O = dIMP + diphosphate + H(+). The catalysed reaction is XTP + H2O = XMP + diphosphate + H(+). Pyrophosphatase that hydrolyzes non-canonical purine nucleotides such as inosine triphosphate (ITP), deoxyinosine triphosphate (dITP) or xanthosine 5'-triphosphate (XTP) to their respective monophosphate derivatives. The enzyme does not distinguish between the deoxy- and ribose forms. Probably excludes non-canonical purines from RNA and DNA precursor pools, thus preventing their incorporation into RNA and DNA and avoiding chromosomal lesions. This is Inosine triphosphate pyrophosphatase from Culex quinquefasciatus (Southern house mosquito).